The following is a 238-amino-acid chain: Synapse differentiation-inducing gene protein 1-like (238 aa).

3 disordered regions span residues 1–24 (MESL…GPYP), 78–111 (KVKE…PGQA), and 126–155 (EEFQ…NFLT). Residues 1–162 (MESLSELQNP…FLTLPPRDHL (162 aa)) are Extracellular-facing. Positions 133-151 (GDPEEEESDATSTESESED) are enriched in acidic residues. A helical membrane pass occupies residues 163 to 183 (GLTIFSMLCCFWPLGIAAFYF). The Cytoplasmic portion of the chain corresponds to 184–205 (SQGTSKAISKGDFRLANTTSRR). A helical membrane pass occupies residues 206-226 (ALFLATLSIAVGAGLYVAVVV). Over 227–238 (ALAAYMSQNGHS) the chain is Extracellular.

Belongs to the CD225/Dispanin family.

Its subcellular location is the membrane. It is found in the golgi apparatus. It localises to the cis-Golgi network. The chain is Synapse differentiation-inducing gene protein 1-like (SYNDIG1L) from Bos taurus (Bovine).